Reading from the N-terminus, the 189-residue chain is Protein CotJC (189 aa).

It belongs to the manganese catalase family.

Its function is as follows. The cotJ operon proteins affect spore coat composition. They are either required for the normal formation of the inner layers of the coat or are themselves structural components of the coat. This Bacillus subtilis (strain 168) protein is Protein CotJC (cotJC).